Here is a 480-residue protein sequence, read N- to C-terminus: Adenosylhomocysteinase (480 aa).

Substrate contacts are provided by T63, D142, and E203. 204–206 (TTT) contributes to the NAD(+) binding site. 2 residues coordinate substrate: K233 and D237. NAD(+) is bound by residues N238, 267-272 (GYGDVG), E290, N325, 346-348 (IGH), and N394.

Belongs to the adenosylhomocysteinase family. The cofactor is NAD(+).

The protein resides in the cytoplasm. It carries out the reaction S-adenosyl-L-homocysteine + H2O = L-homocysteine + adenosine. It participates in amino-acid biosynthesis; L-homocysteine biosynthesis; L-homocysteine from S-adenosyl-L-homocysteine: step 1/1. May play a key role in the regulation of the intracellular concentration of adenosylhomocysteine. The protein is Adenosylhomocysteinase of Xanthomonas euvesicatoria pv. vesicatoria (strain 85-10) (Xanthomonas campestris pv. vesicatoria).